The chain runs to 258 residues: MLIGIRISEVWFGVITLFPEMLKSVTDFGVVGKAIKQSSIEVCTWNPRDYATDNYRTVDDRPYGGGPGMLMKVGPLEAALNAAKSVAPAGSKVVYLSPQGRRLDQALARSALSVPGLILLCGRYEGIDERLIEDEVDEEWSLGDFVLSGGEIAAMAIIDSVSRLAPGVLGHNESAEQDSFENSLLDCPHYTRPEIYRDKRVPEVLLSGNHEKIRRWRLEQSLLRTLQRRPDLLEQRELSEEEAQIIQELRRGQLISET.

S-adenosyl-L-methionine is bound by residues G122 and 142–147; that span reads LGDFVL.

It belongs to the RNA methyltransferase TrmD family. Homodimer.

Its subcellular location is the cytoplasm. The enzyme catalyses guanosine(37) in tRNA + S-adenosyl-L-methionine = N(1)-methylguanosine(37) in tRNA + S-adenosyl-L-homocysteine + H(+). Its function is as follows. Specifically methylates guanosine-37 in various tRNAs. In Hahella chejuensis (strain KCTC 2396), this protein is tRNA (guanine-N(1)-)-methyltransferase.